Consider the following 474-residue polypeptide: Methylenetetrahydrofolate--tRNA-(uracil-5-)-methyltransferase TrmFO (474 aa).

14-19 (GGGLAG) contributes to the FAD binding site.

Belongs to the MnmG family. TrmFO subfamily. FAD serves as cofactor.

The protein resides in the cytoplasm. The catalysed reaction is uridine(54) in tRNA + (6R)-5,10-methylene-5,6,7,8-tetrahydrofolate + NADH + H(+) = 5-methyluridine(54) in tRNA + (6S)-5,6,7,8-tetrahydrofolate + NAD(+). It catalyses the reaction uridine(54) in tRNA + (6R)-5,10-methylene-5,6,7,8-tetrahydrofolate + NADPH + H(+) = 5-methyluridine(54) in tRNA + (6S)-5,6,7,8-tetrahydrofolate + NADP(+). Catalyzes the folate-dependent formation of 5-methyl-uridine at position 54 (M-5-U54) in all tRNAs. The chain is Methylenetetrahydrofolate--tRNA-(uracil-5-)-methyltransferase TrmFO from Caulobacter vibrioides (strain ATCC 19089 / CIP 103742 / CB 15) (Caulobacter crescentus).